A 134-amino-acid chain; its full sequence is NADH-quinone oxidoreductase subunit A (134 aa).

Transmembrane regions (helical) follow at residues 12–32, 64–84, and 93–113; these read FAIYVIGAIAICLTMIGLAAL, FYLVAMFFVIFDVEALYLFAW, and WVGFIEATIFIGLLLIGLVYL.

Belongs to the complex I subunit 3 family. As to quaternary structure, NDH-1 is composed of 13 different subunits. Subunits NuoA, H, J, K, L, M, N constitute the membrane sector of the complex.

It localises to the cell inner membrane. It catalyses the reaction a quinone + NADH + 5 H(+)(in) = a quinol + NAD(+) + 4 H(+)(out). In terms of biological role, NDH-1 shuttles electrons from NADH, via FMN and iron-sulfur (Fe-S) centers, to quinones in the respiratory chain. The immediate electron acceptor for the enzyme in this species is believed to be ubiquinone. Couples the redox reaction to proton translocation (for every two electrons transferred, four hydrogen ions are translocated across the cytoplasmic membrane), and thus conserves the redox energy in a proton gradient. This chain is NADH-quinone oxidoreductase subunit A, found in Shewanella oneidensis (strain ATCC 700550 / JCM 31522 / CIP 106686 / LMG 19005 / NCIMB 14063 / MR-1).